A 113-amino-acid polypeptide reads, in one-letter code: Hydrogenase maturation factor HypA (113 aa).

Residue His2 participates in Ni(2+) binding. Zn(2+)-binding residues include Cys73, Cys76, Cys89, and Cys92.

The protein belongs to the HypA/HybF family.

Its function is as follows. Involved in the maturation of [NiFe] hydrogenases. Required for nickel insertion into the metal center of the hydrogenase. This chain is Hydrogenase maturation factor HypA, found in Actinobacillus succinogenes (strain ATCC 55618 / DSM 22257 / CCUG 43843 / 130Z).